A 154-amino-acid polypeptide reads, in one-letter code: 6,7-dimethyl-8-ribityllumazine synthase (154 aa).

5-amino-6-(D-ribitylamino)uracil contacts are provided by residues Phe-23, 57–59 (AFE), and 81–83 (AVI). 86–87 (ST) is a (2S)-2-hydroxy-3-oxobutyl phosphate binding site. Residue His-89 is the Proton donor of the active site. Residue Phe-114 participates in 5-amino-6-(D-ribitylamino)uracil binding. Arg-128 is a (2S)-2-hydroxy-3-oxobutyl phosphate binding site.

It belongs to the DMRL synthase family.

The enzyme catalyses (2S)-2-hydroxy-3-oxobutyl phosphate + 5-amino-6-(D-ribitylamino)uracil = 6,7-dimethyl-8-(1-D-ribityl)lumazine + phosphate + 2 H2O + H(+). Its pathway is cofactor biosynthesis; riboflavin biosynthesis; riboflavin from 2-hydroxy-3-oxobutyl phosphate and 5-amino-6-(D-ribitylamino)uracil: step 1/2. Functionally, catalyzes the formation of 6,7-dimethyl-8-ribityllumazine by condensation of 5-amino-6-(D-ribitylamino)uracil with 3,4-dihydroxy-2-butanone 4-phosphate. This is the penultimate step in the biosynthesis of riboflavin. This Campylobacter jejuni subsp. doylei (strain ATCC BAA-1458 / RM4099 / 269.97) protein is 6,7-dimethyl-8-ribityllumazine synthase.